Reading from the N-terminus, the 442-residue chain is Glutamyl-tRNA(Gln) amidotransferase subunit A (442 aa).

Active-site charge relay system residues include K50 and S125. The active-site Acyl-ester intermediate is S149.

It belongs to the amidase family. GatA subfamily. Heterotrimer of A, B and C subunits.

The enzyme catalyses L-glutamyl-tRNA(Gln) + L-glutamine + ATP + H2O = L-glutaminyl-tRNA(Gln) + L-glutamate + ADP + phosphate + H(+). Its function is as follows. Allows the formation of correctly charged Gln-tRNA(Gln) through the transamidation of misacylated Glu-tRNA(Gln) in organisms which lack glutaminyl-tRNA synthetase. The reaction takes place in the presence of glutamine and ATP through an activated gamma-phospho-Glu-tRNA(Gln). The polypeptide is Glutamyl-tRNA(Gln) amidotransferase subunit A (Nitratiruptor sp. (strain SB155-2)).